Reading from the N-terminus, the 370-residue chain is Ornithine carbamoyltransferase, mitochondrial (370 aa).

Residues Met-1–Thr-38 constitute a mitochondrion transit peptide. Carbamoyl phosphate is bound by residues Ser-97–Thr-100, Arg-148, His-175, and Gln-178. Asn-216, Asp-282, Ser-286, and Met-287 together coordinate L-ornithine. Residue Cys-324 is the Proton acceptor of the active site. Carbamoyl phosphate-binding positions include Cys-324–Leu-325 and Arg-351.

The protein belongs to the aspartate/ornithine carbamoyltransferase superfamily. OTCase family. Homotrimer.

It localises to the mitochondrion matrix. It catalyses the reaction carbamoyl phosphate + L-ornithine = L-citrulline + phosphate + H(+). It functions in the pathway amino-acid biosynthesis; L-arginine biosynthesis; L-arginine from L-ornithine and carbamoyl phosphate: step 1/3. This is Ornithine carbamoyltransferase, mitochondrial (argB) from Aspergillus niger.